We begin with the raw amino-acid sequence, 936 residues long: Aconitate hydratase A (936 aa).

Positions 401-449 (VTPDFDAEGPATENTSAQTAGTPASAADAKGNIPSAAAGAEGRPSNPVT) are disordered. A compositionally biased stretch (polar residues) spans 412 to 422 (TENTSAQTAGT). 3 residues coordinate [4Fe-4S] cluster: Cys-472, Cys-538, and Cys-541.

It belongs to the aconitase/IPM isomerase family. Monomer. Requires [4Fe-4S] cluster as cofactor.

The enzyme catalyses citrate = D-threo-isocitrate. It carries out the reaction (2S,3R)-3-hydroxybutane-1,2,3-tricarboxylate = 2-methyl-cis-aconitate + H2O. Its pathway is carbohydrate metabolism; tricarboxylic acid cycle; isocitrate from oxaloacetate: step 2/2. The protein operates within organic acid metabolism; propanoate degradation. Functionally, involved in the catabolism of short chain fatty acids (SCFA) via the tricarboxylic acid (TCA)(acetyl degradation route) and probably via the 2-methylcitrate cycle I (propionate degradation route). Catalyzes the reversible isomerization of citrate to isocitrate via cis-aconitate. Could catalyze the hydration of 2-methyl-cis-aconitate to yield (2R,3S)-2-methylisocitrate. The apo form of AcnA functions as a RNA-binding regulatory protein. This is Aconitate hydratase A (acn) from Corynebacterium jeikeium (strain K411).